We begin with the raw amino-acid sequence, 233 residues long: uncharacterized protein (233 aa).

Disordered stretches follow at residues methionine 1–leucine 159 and methionine 181–methionine 206. Over residues arginine 36–alanine 115 the composition is skewed to basic and acidic residues. Residues serine 135–serine 148 show a composition bias toward low complexity. Basic and acidic residues predominate over residues proline 189–methionine 206.

This is an uncharacterized protein from Caenorhabditis elegans.